Here is a 250-residue protein sequence, read N- to C-terminus: Replicating protein (250 aa).

Disordered regions lie at residues 1–23 and 168–250; these read MFQQIGAVQAKSGTDEPAHPCEK and KAHM…KAFE. Basic and acidic residues-rich tracts occupy residues 13–23 and 178–190; these read GTDEPAHPCEK and DRLRETVEDRTRA. Polar residues predominate over residues 218 to 237; the sequence is SRCSFTTPNRPRRTLPSSHP.

Required for replication. It likely regulates pTAR copy number. The sequence is that of Replicating protein (repA) from Rhizobium radiobacter (Agrobacterium tumefaciens).